The sequence spans 227 residues: Cytidylate kinase (227 aa).

An ATP-binding site is contributed by 7–15 (GPSGAGKGT).

The protein belongs to the cytidylate kinase family. Type 1 subfamily.

The protein resides in the cytoplasm. It catalyses the reaction CMP + ATP = CDP + ADP. It carries out the reaction dCMP + ATP = dCDP + ADP. The chain is Cytidylate kinase from Actinobacillus succinogenes (strain ATCC 55618 / DSM 22257 / CCUG 43843 / 130Z).